The following is a 139-amino-acid chain: Putative pre-16S rRNA nuclease (139 aa).

The protein belongs to the YqgF nuclease family.

It is found in the cytoplasm. Could be a nuclease involved in processing of the 5'-end of pre-16S rRNA. The protein is Putative pre-16S rRNA nuclease of Photorhabdus laumondii subsp. laumondii (strain DSM 15139 / CIP 105565 / TT01) (Photorhabdus luminescens subsp. laumondii).